Reading from the N-terminus, the 204-residue chain is Synaptosomal-associated protein 25-A (204 aa).

Residues 1-11 (MAEDADMRNEL) show a composition bias toward basic and acidic residues. A disordered region spans residues 1 to 25 (MAEDADMRNELSDMQQRADQLADES). 2 t-SNARE coiled-coil homology domains span residues 19–81 (DQLA…LNDL) and 138–200 (DARE…ATKM).

It belongs to the SNAP-25 family.

The protein resides in the synapse. It is found in the synaptosome. The protein localises to the cell membrane. May play an important role in the synaptic function of specific neuronal systems. Associates with proteins involved in vesicle docking and membrane fusion. This Carassius auratus (Goldfish) protein is Synaptosomal-associated protein 25-A (snap25a).